We begin with the raw amino-acid sequence, 113 residues long: Dynein light chain Tctex-type 1 (113 aa).

Residue Met-1 is modified to N-acetylmethionine. An interaction with GNB1 region spans residues 41-113; sequence QWTTNVVEQT…CIVSAFGLSI (73 aa).

It belongs to the dynein light chain Tctex-type family. In terms of assembly, homodimer. The cytoplasmic dynein 1 complex consists of two catalytic heavy chains (HCs) and a number of non-catalytic subunits presented by intermediate chains (ICs), light intermediate chains (LICs) and light chains (LCs); the composition seems to vary in respect to the IC, LIC and LC composition. The heavy chain homodimer serves as a scaffold for the probable homodimeric assembly of the respective non-catalytic subunits. The ICs and LICs bind directly to the HC dimer and dynein LCs assemble on the IC dimer. DYNLT1 and DYNLT3 compete for association with dynein IC (DYNC1I1 or DYNC1I2). Self-associates. Interacts with RHO. Interacts with DYNC1I1 and DYNC1I2. Interacts with DOC2A, DOC2B and SCN10A. Interacts with PVR. Interacts with SVIL isoform 2. Interacts with GNB1; the interaction occurs in presence of guanine nucleotide-binding protein G(T) subunit gamma; the interaction diminishes the association of DYNLT1 with dynein IC (DYNC1I1 or DYNC1I2). Interacts with GNB2, GNB3 and GNB5; the interactions occur in presence of guanine nucleotide-binding protein G(T) subunit gamma. Interacts with ACVR2B and ARHGEF2. Interacts with DNAI4. Interacts with CFAP61. In terms of processing, phosphorylated by BMPR2. The phosphorylation status is proposed to regulate the association with the cytoplasmic dynein complex and may have role in cytoplasmic dynein cargo release.

Its subcellular location is the golgi apparatus. The protein localises to the cytoplasm. It is found in the cytoskeleton. It localises to the spindle. Functionally, acts as one of several non-catalytic accessory components of the cytoplasmic dynein 1 complex that are thought to be involved in linking dynein to cargos and to adapter proteins that regulate dynein function. Cytoplasmic dynein 1 acts as a motor for the intracellular retrograde motility of vesicles and organelles along microtubules. Binds to transport cargos and is involved in apical cargo transport such as rhodopsin-bearing vesicles in polarized epithelia. Is involved in intracellular targeting of D-type retrovirus gag polyproteins to the cytoplasmic assembly site. May also be a accessory component of axonemal dynein. Its function is as follows. Plays a role in neuronal morphogenesis; the function is independent of cytoplasmic dynein and seems to be coupled to regulation of the actin cytoskeleton by enhancing Rac1 activity. Required for neurite outgrowth. The function in neurogenesis may be regulated by association with a G-protein beta-gamma dimer. May function as a receptor-independent activator of heterotrimeric G-protein signaling; the activation appears to be independent of a nucleotide exchange. Plays a role in regulating neurogenesis; inhibits the genesis of neurons from precursor cells during cortical development presumably by antagonizing ARHGEF2. Unrelated to the role in retrograde microtubule-associated movement may play a role in the dimerization of cytoplasmic proteins/domains such as for ACVR2B. Binds to the cytoplasmic domain of ACVR2B and, in vitro, inhibits ACVR2B signaling. Involved in the regulation of mitotic spindle orientation. In Rattus norvegicus (Rat), this protein is Dynein light chain Tctex-type 1 (Dynlt1).